We begin with the raw amino-acid sequence, 967 residues long: MGNFVCIEISGDQMLDRIIRCLCGKGYIRNLEKNLRALQREMEDLRATQHEVQNKVAREESRHQQRLEAVQVWLDRVNSIDIECKDLLSVSPVELQKLCLCGLCSKYVCSSYKYGKRVFLLLEEVTKLKSEGNFDEVSQPPPRSEVEERPTQPTIGQEEMLKKAWNRLMEDGVGIMGLHGMGGVGKTTLFKKIHNKFAETGGTFDIVIWIVVSQGAKLSKLQEDIAEKLHLCDDLWKNKNESDKATDIHRVLKGKRFVLMLDDIWEKVDLEAIGIPYPSEVNKCKVAFTTRDQKVCGQMGDHKPMQVKCLEPEDAWELFKNKVGDNTLRSDPVIVGLAREVAQKCRGLPLALSCIGETMASKTMVQEWEHAIDVLTRSAAEFSDMQNKILPILKYSYDSLEDEHIKSCFLYCALFPEDDKIDTKTLINKWICEGFIGEDQVIKRARNKGYEMLGTLIRANLLTNDRGFVKWHVVMHDVVREMALWIASDFGKQKENYVVRARVGLHEIPKVKDWGAVRRMSLMMNEIEEITCESKCSELTTLFLQSNQLKNLSGEFIRYMQKLVVLDLSHNPDFNELPEQISGLVSLQYLDLSWTRIEQLPVGLKELKKLIFLNLCFTERLCSISGISRLLSLRWLSLRESNVHGDASVLKELQQLENLQDLRITESAELISLDQRLAKLISVLRIEGFLQKPFDLSFLASMENLYGLLVENSYFSEINIKCRESETESSYLHINPKIPCFTNLTGLIIMKCHSMKDLTWILFAPNLVNLDIRDSREVGEIINKEKAINLTSIITPFQKLERLFLYGLPKLESIYWSPLPFPLLSNIVVKYCPKLRKLPLNATSVPLVEEFEIRMDPPEQENELEWEDEDTKNRFLPSIKPLVRRLKIHYSGMGFLNVKNQNPRFFFYCFIYLLVVHLDCIIDLHSDTSGMCCVVHLDYVFHFPFVFPKTFCILFRLHFYTIKSLCV.

Residues 20 to 68 are a coiled coil; the sequence is RCLCGKGYIRNLEKNLRALQREMEDLRATQHEVQNKVAREESRHQQRLE. The segment at 132 to 153 is disordered; sequence GNFDEVSQPPPRSEVEERPTQP. An NB-ARC domain is found at 138–441; it reads SQPPPRSEVE…CEGFIGEDQV (304 aa). 180–187 serves as a coordination point for ATP; the sequence is GMGGVGKT. LRR repeat units follow at residues 516–537, 538–559, 562–585, 586–608, and 609–631; these read AVRR…SKCS, ELTT…FIRY, KLVV…SGLV, SLQY…KELK, and KLIF…SRLL.

Belongs to the disease resistance NB-LRR family.

Its function is as follows. Probable disease resistance protein. The protein is Probable disease resistance protein At1g61190 of Arabidopsis thaliana (Mouse-ear cress).